The primary structure comprises 119 residues: Small ribosomal subunit protein bS6 (119 aa).

The interval 95–119 (AVTEPSPLAKGNEKREDRKESEDAE) is disordered. Over residues 105–119 (GNEKREDRKESEDAE) the composition is skewed to basic and acidic residues.

The protein belongs to the bacterial ribosomal protein bS6 family.

In terms of biological role, binds together with bS18 to 16S ribosomal RNA. The polypeptide is Small ribosomal subunit protein bS6 (Halorhodospira halophila (strain DSM 244 / SL1) (Ectothiorhodospira halophila (strain DSM 244 / SL1))).